Here is a 54-residue protein sequence, read N- to C-terminus: VATVDCSDYPKPACTVEYMPLCGSDNKTYDNKCNFCNAVVDSNGTLTLSHFGKC.

The Kazal-like domain occupies 4 to 54; sequence VDCSDYPKPACTVEYMPLCGSDNKTYDNKCNFCNAVVDSNGTLTLSHFGKC. 3 disulfide bridges follow: Cys6–Cys36, Cys14–Cys33, and Cys22–Cys54. An N-linked (GlcNAc...) asparagine glycan is attached at Asn43.

The protein resides in the secreted. The polypeptide is Ovomucoid (Anser anser anser (Western greylag goose)).